A 670-amino-acid chain; its full sequence is Methionine--tRNA ligase (670 aa).

A 'HIGH' region motif is present at residues 14–24; sequence PYANGHLHLGH. Zn(2+) is bound by residues Cys-145, Cys-148, Cys-158, and Cys-161. Positions 330 to 334 match the 'KMSKS' region motif; sequence KMSKS. Residue Lys-333 participates in ATP binding. The 101-residue stretch at 570–670 folds into the tRNA-binding domain; sequence DFAKVDLRIA…AGALPGMKVK (101 aa).

It belongs to the class-I aminoacyl-tRNA synthetase family. MetG type 1 subfamily. In terms of assembly, homodimer. Zn(2+) serves as cofactor.

Its subcellular location is the cytoplasm. The enzyme catalyses tRNA(Met) + L-methionine + ATP = L-methionyl-tRNA(Met) + AMP + diphosphate. Is required not only for elongation of protein synthesis but also for the initiation of all mRNA translation through initiator tRNA(fMet) aminoacylation. In Legionella pneumophila subsp. pneumophila (strain Philadelphia 1 / ATCC 33152 / DSM 7513), this protein is Methionine--tRNA ligase.